The primary structure comprises 414 residues: Multifunctional CCA protein (414 aa).

Residues glycine 8 and arginine 11 each coordinate ATP. The CTP site is built by glycine 8 and arginine 11. Positions 21 and 23 each coordinate Mg(2+). ATP is bound by residues arginine 91, arginine 137, and arginine 140. 3 residues coordinate CTP: arginine 91, arginine 137, and arginine 140. Residues 228 to 329 enclose the HD domain; the sequence is TGIHTMMTVA…LKLFDAIDVW (102 aa).

Belongs to the tRNA nucleotidyltransferase/poly(A) polymerase family. Bacterial CCA-adding enzyme type 1 subfamily. Monomer. Can also form homodimers and oligomers. Mg(2+) is required as a cofactor. Requires Ni(2+) as cofactor.

The enzyme catalyses a tRNA precursor + 2 CTP + ATP = a tRNA with a 3' CCA end + 3 diphosphate. It carries out the reaction a tRNA with a 3' CCA end + 2 CTP + ATP = a tRNA with a 3' CCACCA end + 3 diphosphate. Its function is as follows. Catalyzes the addition and repair of the essential 3'-terminal CCA sequence in tRNAs without using a nucleic acid template. Adds these three nucleotides in the order of C, C, and A to the tRNA nucleotide-73, using CTP and ATP as substrates and producing inorganic pyrophosphate. tRNA 3'-terminal CCA addition is required both for tRNA processing and repair. Also involved in tRNA surveillance by mediating tandem CCA addition to generate a CCACCA at the 3' terminus of unstable tRNAs. While stable tRNAs receive only 3'-terminal CCA, unstable tRNAs are marked with CCACCA and rapidly degraded. The sequence is that of Multifunctional CCA protein from Pectobacterium carotovorum subsp. carotovorum (strain PC1).